A 712-amino-acid chain; its full sequence is tRNA 5-methylaminomethyl-2-thiouridine biosynthesis bifunctional protein MnmC (712 aa).

The interval 1-268 is tRNA (mnm(5)s(2)U34)-methyltransferase; the sequence is MPNMRHRVNS…RRALRHAQSD (268 aa). Positions 292 to 712 are FAD-dependent cmnm(5)s(2)U34 oxidoreductase; that stretch reads IGGGVASTHL…MRKLIKGKAL (421 aa).

In the N-terminal section; belongs to the methyltransferase superfamily. tRNA (mnm(5)s(2)U34)-methyltransferase family. This sequence in the C-terminal section; belongs to the DAO family. Requires FAD as cofactor.

Its subcellular location is the cytoplasm. It carries out the reaction 5-aminomethyl-2-thiouridine(34) in tRNA + S-adenosyl-L-methionine = 5-methylaminomethyl-2-thiouridine(34) in tRNA + S-adenosyl-L-homocysteine + H(+). Catalyzes the last two steps in the biosynthesis of 5-methylaminomethyl-2-thiouridine (mnm(5)s(2)U) at the wobble position (U34) in tRNA. Catalyzes the FAD-dependent demodification of cmnm(5)s(2)U34 to nm(5)s(2)U34, followed by the transfer of a methyl group from S-adenosyl-L-methionine to nm(5)s(2)U34, to form mnm(5)s(2)U34. In Shewanella sediminis (strain HAW-EB3), this protein is tRNA 5-methylaminomethyl-2-thiouridine biosynthesis bifunctional protein MnmC.